Reading from the N-terminus, the 319-residue chain is tRNA uridine(34) hydroxylase (319 aa).

One can recognise a Rhodanese domain in the interval 124 to 218; sequence LDEDTVILDA…YGKNEETKGE (95 aa). Cys178 serves as the catalytic Cysteine persulfide intermediate.

The protein belongs to the TrhO family.

The catalysed reaction is uridine(34) in tRNA + AH2 + O2 = 5-hydroxyuridine(34) in tRNA + A + H2O. Functionally, catalyzes oxygen-dependent 5-hydroxyuridine (ho5U) modification at position 34 in tRNAs. The chain is tRNA uridine(34) hydroxylase from Listeria monocytogenes serotype 4b (strain CLIP80459).